The primary structure comprises 917 residues: Protein STE5 (917 aa).

Disordered regions lie at residues 1–25 and 58–151; these read MMETPTDNIVSPFHNFGSSTQYSGT and FQRS…LSDN. Residues 16 to 25 are compositionally biased toward polar residues; that stretch reads FGSSTQYSGT. The segment covering 69-84 has biased composition (low complexity); sequence SPSPISSSTFSFSPKS. Composition is skewed to polar residues over residues 85 to 110 and 118 to 138; these read RVTSSNSSGNEDGNLMNTPSTVSTDY and TSSLPRPNSNLFHASNSNLSR. Position 329 is a phosphoserine (Ser329). Acidic residues predominate over residues 778–794; the sequence is HDDDDEEDNDDSTDNEL. A disordered region spans residues 778–821; sequence HDDDDEEDNDDSTDNELDNSSGSLSDAESTTTIHIDSPFDNENA. Over residues 799–821 the composition is skewed to polar residues; that stretch reads GSLSDAESTTTIHIDSPFDNENA.

The protein to yeast FAR1. May be regulated at the phosphorylation level, and by the mating type of the cell and depends on an intact pheromone-response pathway.

Its subcellular location is the cytoplasm. Component of the pheromone signal transduction pathway. It mediates pheromone signals acting between STE20 and STE11. It is absolutely required for pheromone-induced transcription of FUS1. May play a role in cell-cycle arrest in response to pheromone. In Saccharomyces cerevisiae (strain ATCC 204508 / S288c) (Baker's yeast), this protein is Protein STE5 (STE5).